Here is a 637-residue protein sequence, read N- to C-terminus: Chaperone protein HtpG (637 aa).

Residues 1 to 338 form an a; substrate-binding region; sequence MMELKMHNVK…SPDLPLNISR (338 aa). The b stretch occupies residues 339–558; that stretch reads ETLQNNRVVE…EGAMDLRMER (220 aa). The disordered stretch occupies residues 493–512; that stretch reads KFSPEEKDKENKSDEERAEG. Residues 559–637 are c; the sequence is FLREQNQLNY…LNNLLGKVII (79 aa).

It belongs to the heat shock protein 90 family. In terms of assembly, homodimer.

It localises to the cytoplasm. Its function is as follows. Molecular chaperone. Has ATPase activity. This Wolbachia sp. subsp. Brugia malayi (strain TRS) protein is Chaperone protein HtpG.